The primary structure comprises 385 residues: MKKLSILGVTGSIGTQALDVIKNSNGELKLIGVTANSSVEKMIKIIEEFDPKYVGMMDKTCAGEIKEYCDKNNKSTIVLSEMKGLNKIASLEEIDIVLTSLVGMIGLEPTLEAIKAKKDIALANKETLVVAGELVMSEAKKNNVKILPVDSEHSAIYQSLRGNDLKTLNKIILTASGGPFRGKKICDLNDISVDDALNHPKWNMGRKISIDSATLMNKGLEVIEAHWLFECDYDNIQVVIHPQSIVHSMVEYCDGSIIAQLGAADMRLPIQYALNYTERKNLIAKTLDFYEVSQLTFEKPDLETFKPLKLAFKAGKQGGLMPTILNGANEAAVALFLDEKIEFLDIFNIIENCMNRFEEETKKPLTLENIIELDKKVKKYVVDMK.

NADPH-binding residues include T10, G11, S12, I13, and N124. K125 serves as a coordination point for 1-deoxy-D-xylulose 5-phosphate. Residue E126 participates in NADPH binding. Residue D150 participates in Mn(2+) binding. Residues S151, E152, S176, and H199 each contribute to the 1-deoxy-D-xylulose 5-phosphate site. E152 serves as a coordination point for Mn(2+). An NADPH-binding site is contributed by G205. Residues S212, N217, K218, and E221 each coordinate 1-deoxy-D-xylulose 5-phosphate. Residue E221 coordinates Mn(2+).

This sequence belongs to the DXR family. It depends on Mg(2+) as a cofactor. Requires Mn(2+) as cofactor.

The catalysed reaction is 2-C-methyl-D-erythritol 4-phosphate + NADP(+) = 1-deoxy-D-xylulose 5-phosphate + NADPH + H(+). It functions in the pathway isoprenoid biosynthesis; isopentenyl diphosphate biosynthesis via DXP pathway; isopentenyl diphosphate from 1-deoxy-D-xylulose 5-phosphate: step 1/6. Functionally, catalyzes the NADPH-dependent rearrangement and reduction of 1-deoxy-D-xylulose-5-phosphate (DXP) to 2-C-methyl-D-erythritol 4-phosphate (MEP). This chain is 1-deoxy-D-xylulose 5-phosphate reductoisomerase, found in Clostridium botulinum (strain Alaska E43 / Type E3).